The sequence spans 329 residues: Cathepsin K (329 aa).

Residues 1 to 15 form the signal peptide; the sequence is MWGLKVLLLPVMSFA. Positions 16–114 are cleaved as a propeptide — activation peptide; the sequence is LYPEEILDTH…TLYIPDWEGR (99 aa). Residue Asn103 is glycosylated (N-linked (GlcNAc...) asparagine). Cystine bridges form between Cys136–Cys177, Cys170–Cys210, and Cys269–Cys318. The active site involves Cys139. Residues His276 and Asn296 contribute to the active site.

Belongs to the peptidase C1 family.

Its subcellular location is the lysosome. The protein localises to the secreted. It is found in the apical cell membrane. The enzyme catalyses Broad proteolytic activity. With small-molecule substrates and inhibitors, the major determinant of specificity is P2, which is preferably Leu, Met &gt; Phe, and not Arg.. Functionally, thiol protease involved in osteoclastic bone resorption and may participate partially in the disorder of bone remodeling. Displays potent endoprotease activity against fibrinogen at acid pH. May play an important role in extracellular matrix degradation. Involved in the release of thyroid hormone thyroxine (T4) by limited proteolysis of TG/thyroglobulin in the thyroid follicle lumen. This Macaca fascicularis (Crab-eating macaque) protein is Cathepsin K (CTSK).